A 29-amino-acid chain; its full sequence is Dermaseptin-J8 (29 aa).

In terms of tissue distribution, expressed by the skin glands.

The protein localises to the secreted. Its function is as follows. Has antimicrobial activity. This is Dermaseptin-J8 from Phasmahyla jandaia (Jandaia leaf frog).